The sequence spans 640 residues: 1-deoxy-D-xylulose-5-phosphate synthase (640 aa).

Thiamine diphosphate contacts are provided by residues H75 and 117–119 (GHA). D146 lines the Mg(2+) pocket. Residues 147–148 (AA), N175, and E370 contribute to the thiamine diphosphate site. Mg(2+) is bound at residue N175.

It belongs to the transketolase family. DXPS subfamily. Homodimer. Requires Mg(2+) as cofactor. The cofactor is thiamine diphosphate.

The catalysed reaction is D-glyceraldehyde 3-phosphate + pyruvate + H(+) = 1-deoxy-D-xylulose 5-phosphate + CO2. It participates in metabolic intermediate biosynthesis; 1-deoxy-D-xylulose 5-phosphate biosynthesis; 1-deoxy-D-xylulose 5-phosphate from D-glyceraldehyde 3-phosphate and pyruvate: step 1/1. Functionally, catalyzes the acyloin condensation reaction between C atoms 2 and 3 of pyruvate and glyceraldehyde 3-phosphate to yield 1-deoxy-D-xylulose-5-phosphate (DXP). This Chlamydia trachomatis serovar A (strain ATCC VR-571B / DSM 19440 / HAR-13) protein is 1-deoxy-D-xylulose-5-phosphate synthase.